The following is a 55-amino-acid chain: U17-myrmicitoxin-Mri1b (55 aa).

The first 31 residues, 1–31 (MENSRTSTFTAYVTVAFLLISTFVTMVVTES), serve as a signal peptide directing secretion. Gln32 bears the Pyrrolidone carboxylic acid mark.

Contains 1 disulfide bond. As to expression, expressed by the venom gland.

Its subcellular location is the secreted. This Manica rubida (European giant red ant) protein is U17-myrmicitoxin-Mri1b.